A 438-amino-acid chain; its full sequence is Putative cytochrome P450 140 (438 aa).

C381 contacts heme.

It belongs to the cytochrome P450 family. Requires heme as cofactor.

In Mycobacterium bovis (strain ATCC BAA-935 / AF2122/97), this protein is Putative cytochrome P450 140 (cyp140).